We begin with the raw amino-acid sequence, 356 residues long: CLIP domain-containing serine protease C9 (356 aa).

The region spanning 49–94 (SCDTPQVIGGKCMNISLCDPAFVHSIAYQEHTPVCQQNAFYRVICC) is the Clip domain. 4 disulfides stabilise this stretch: C50/C93, C60/C83, C66/C94, and C139/C155. N62 carries N-linked (GlcNAc...) asparagine glycosylation. A Peptidase S1 domain is found at 109–351 (IMHGIEAEPG…YFGWIKETVS (243 aa)). Active-site charge relay system residues include H154 and D194. C258 and C284 are joined by a disulfide. N292 carries an N-linked (GlcNAc...) asparagine glycan. C300 and C328 are joined by a disulfide. The Charge relay system role is filled by S304.

The protein belongs to the peptidase S1 family. CLIP subfamily. In the active form, heterodimer of a p12 subunit and a p30 subunit; disulfide-linked. In terms of processing, secreted as a full-length protein. Following bacterium E.coli infection, proteolytically cleaved into two chains, p12 and p30, which remain covalently linked.

It localises to the secreted. Functionally, probable serine protease which plays an essential role in the innate immune response against bacteria and protozoa infection by activating the melanization cascade. In the susceptible strain G3, appears to be dispensable for ookinete elimination which occurs by lysis. The chain is CLIP domain-containing serine protease C9 from Anopheles gambiae (African malaria mosquito).